The chain runs to 632 residues: Pescadillo homolog (632 aa).

Positions 306 to 341 (GDDADVDMDEGAKETDEEEDEDFVERPSKAQEVDDV) are disordered. The span at 307–328 (DDADVDMDEGAKETDEEEDEDF) shows a compositional bias: acidic residues. Residues 361–459 (RQNLLFSPYT…KIISSEGYGP (99 aa)) enclose the BRCT domain. Disordered regions lie at residues 485-535 (GEKA…QNPS), 565-585 (TKVH…EEDL), and 601-632 (MQYS…EAKA). Positions 492–516 (QEGEEEEEAAEQDEGESEDEEEDGK) are enriched in acidic residues. The span at 521-531 (AEYPPALLAAA) shows a compositional bias: low complexity. 2 stretches are compositionally biased toward basic and acidic residues: residues 576–585 (QKEKKGEEDL) and 605–616 (NREKAAEKEKLE). Residues 595 to 632 (AKLYEKMQYSNREKAAEKEKLEKKRKAIEKRKAKEAKA) adopt a coiled-coil conformation.

Belongs to the pescadillo family. As to quaternary structure, component of the NOP7 complex, composed of ERB1, NOP7 and YTM1. The complex is held together by ERB1, which interacts with NOP7 via its N-terminal domain and with YTM1 via a high-affinity interaction between the seven-bladed beta-propeller domains of the 2 proteins. The NOP7 complex associates with the 66S pre-ribosome.

The protein resides in the nucleus. The protein localises to the nucleolus. It localises to the nucleoplasm. In terms of biological role, component of the NOP7 complex, which is required for maturation of the 25S and 5.8S ribosomal RNAs and formation of the 60S ribosome. This Cryptococcus neoformans var. neoformans serotype D (strain B-3501A) (Filobasidiella neoformans) protein is Pescadillo homolog.